We begin with the raw amino-acid sequence, 569 residues long: Isocitrate dehydrogenase kinase/phosphatase (569 aa).

Residues A316–M322 and K337 contribute to the ATP site. D372 is an active-site residue.

Belongs to the AceK family.

It localises to the cytoplasm. The enzyme catalyses L-seryl-[isocitrate dehydrogenase] + ATP = O-phospho-L-seryl-[isocitrate dehydrogenase] + ADP + H(+). Bifunctional enzyme which can phosphorylate or dephosphorylate isocitrate dehydrogenase (IDH) on a specific serine residue. This is a regulatory mechanism which enables bacteria to bypass the Krebs cycle via the glyoxylate shunt in response to the source of carbon. When bacteria are grown on glucose, IDH is fully active and unphosphorylated, but when grown on acetate or ethanol, the activity of IDH declines drastically concomitant with its phosphorylation. This is Isocitrate dehydrogenase kinase/phosphatase from Pseudomonas putida (strain W619).